Here is a 180-residue protein sequence, read N- to C-terminus: Ribosome maturation factor RimM (180 aa).

In terms of domain architecture, PRC barrel spans 99–172 (EDEFYQVDLI…FLVVDPVAAG (74 aa)).

It belongs to the RimM family. As to quaternary structure, binds ribosomal protein uS19.

The protein resides in the cytoplasm. An accessory protein needed during the final step in the assembly of 30S ribosomal subunit, possibly for assembly of the head region. Essential for efficient processing of 16S rRNA. May be needed both before and after RbfA during the maturation of 16S rRNA. It has affinity for free ribosomal 30S subunits but not for 70S ribosomes. The protein is Ribosome maturation factor RimM of Bartonella henselae (strain ATCC 49882 / DSM 28221 / CCUG 30454 / Houston 1) (Rochalimaea henselae).